Consider the following 337-residue polypeptide: 3-isopropylmalate dehydrogenase (337 aa).

Residues Arg88, Arg98, Arg122, and Asp212 each coordinate substrate. Positions 212, 236, and 240 each coordinate Mg(2+). 272–284 (GSAPDIAGKGIAD) contributes to the NAD(+) binding site.

This sequence belongs to the isocitrate and isopropylmalate dehydrogenases family. LeuB type 2 subfamily. In terms of assembly, homodimer. The cofactor is Mg(2+). Mn(2+) is required as a cofactor.

It is found in the cytoplasm. The enzyme catalyses (2R,3S)-3-isopropylmalate + NAD(+) = 4-methyl-2-oxopentanoate + CO2 + NADH. It participates in amino-acid biosynthesis; L-leucine biosynthesis; L-leucine from 3-methyl-2-oxobutanoate: step 3/4. Catalyzes the oxidation of 3-carboxy-2-hydroxy-4-methylpentanoate (3-isopropylmalate) to 3-carboxy-4-methyl-2-oxopentanoate. The product decarboxylates to 4-methyl-2 oxopentanoate. This is 3-isopropylmalate dehydrogenase from Rhodococcus erythropolis (strain PR4 / NBRC 100887).